The sequence spans 326 residues: Protein spaetzle (326 aa).

A signal peptide spans 1-25 (MMTPMWISLFKVLLLLFAFFATYEA). Residue asparagine 48 is glycosylated (N-linked (GlcNAc...) asparagine). The segment at 56 to 82 (FMPIPTQHDDPTQKQKQNQNQSPIPET) is disordered. A compositionally biased stretch (polar residues) spans 69–80 (KQKQNQNQSPIP). 2 N-linked (GlcNAc...) asparagine glycosylation sites follow: asparagine 114 and asparagine 164. The interval 152 to 174 (YRPPQSPARPLRNDTKEHNPCAK) is disordered. A compositionally biased stretch (basic and acidic residues) spans 162 to 174 (LRNDTKEHNPCAK). A Spaetzle domain is found at 228–322 (FLCRSIRKLV…FKIPSCCKCA (95 aa)). Cystine bridges form between cysteine 230-cysteine 288, cysteine 267-cysteine 319, and cysteine 274-cysteine 321.

As to quaternary structure, homodimer; disulfide-linked. In the presence of Tl, crystal structures show one Tl molecule bound to a spaetzle C-106 homodimer. However, the active complex probably consists of two Tl molecules bound to a spaetzle C-106 homodimer. This is supported by in vitro experiments which also show binding of the spaetzle C-106 dimer to 2 Tl receptors. Ligand binding induces conformational changes in the extracellular domain of Tl. This may enable a secondary homodimerization interface at the C-terminus of the Tl extracellular domain. During embryonic development proteolytically processed by activated ea/easter; ea cleaves the signal peptide and also generates the C-terminal 12 kDa active ligand for the Toll receptor, C-106 (except for isoform 8.24 and isoform 11.27 as they do not contain the cleavage site). During the immune response, cleaved in the same manner by SPE. Post-translationally, extracellular forms of isoform 8.19 and isoform 11.7 are glycosylated.

It localises to the secreted. The activated form, spaetzle C-106, acts as a ligand for the Toll receptor. Binding to Toll activates the Toll signaling pathway and induces expression of the antifungal peptide drosomycin. Component of the extracellular signaling pathway that establishes dorsal-ventral polarity in the embryo. In Drosophila melanogaster (Fruit fly), this protein is Protein spaetzle.